The following is a 1081-amino-acid chain: Serine/threonine-protein kinase PKH2 (1081 aa).

Ser138 is subject to Phosphoserine. In terms of domain architecture, Protein kinase spans 179 to 443 (FKFGSVIGDG…ISQIKEHHFF (265 aa)). ATP contacts are provided by residues 189-191 (AYS) and Lys208. The tract at residues 210–255 (LNKEYLIRQKKVKYVSIEKTALQKLNNSPSVVRLFSTFQDESSLYF) is PIF-pocket. ATP is bound by residues 258 to 260 (EYA) and Asp264. Residue Asp303 is the Proton acceptor of the active site. Residues Glu307 and Asp321 each coordinate ATP. The span at 494-526 (HLVTQRSASSPSVEETTHSTLYNNNTHASTESE) shows a compositional bias: polar residues. 3 disordered regions span residues 494 to 652 (HLVT…TYQM), 805 to 833 (NRSGEGYKCNQNSSPMKDDDKSESNNKGS), and 970 to 1017 (IERR…INSA). The span at 527 to 538 (ISIKKRPTDERT) shows a compositional bias: basic and acidic residues. Composition is skewed to low complexity over residues 564–575 (AASAALAASAAL) and 582–602 (SYPTSSSKSSRSSSPATTSRP). Ser619 is subject to Phosphoserine. The span at 632 to 645 (PMPPYTPPMSPPMT) shows a compositional bias: pro residues. 2 stretches are compositionally biased toward polar residues: residues 805–819 (NRSGEGYKCNQNSSP) and 998–1017 (HSQSPSISKHNSFSESINSA). Ser1009 is subject to Phosphoserine.

Belongs to the protein kinase superfamily. AGC Ser/Thr protein kinase family. PDPK1 subfamily.

It localises to the nucleus. The protein localises to the cytoplasm. Its subcellular location is the cell cortex. The catalysed reaction is L-seryl-[protein] + ATP = O-phospho-L-seryl-[protein] + ADP + H(+). The enzyme catalyses L-threonyl-[protein] + ATP = O-phospho-L-threonyl-[protein] + ADP + H(+). With respect to regulation, sphingoid base activates kinase activity. Functionally, serine/threonine-protein kinase which is part sphingolipid-mediated signaling pathway that is required for the internalization step of endocytosis by regulating eisosome assembly and organization, and modulating the organization of the plasma membrane. Phosphorylates and activates PKC1. Activates YPK1 and YPK2, 2 components of signaling cascade required for maintenance of cell wall integrity. Required for stress-induced P-body assembly and regulates global mRNA decay at the deadenylation step. This chain is Serine/threonine-protein kinase PKH2 (PKH2), found in Saccharomyces cerevisiae (strain ATCC 204508 / S288c) (Baker's yeast).